The sequence spans 293 residues: NAD kinase (293 aa).

Aspartate 72 acts as the Proton acceptor in catalysis. NAD(+) is bound by residues 72–73 (DG), 146–147 (ND), arginine 157, arginine 174, aspartate 176, 187–192 (TAYALS), and glutamine 247.

The protein belongs to the NAD kinase family. A divalent metal cation serves as cofactor.

It localises to the cytoplasm. The catalysed reaction is NAD(+) + ATP = ADP + NADP(+) + H(+). Functionally, involved in the regulation of the intracellular balance of NAD and NADP, and is a key enzyme in the biosynthesis of NADP. Catalyzes specifically the phosphorylation on 2'-hydroxyl of the adenosine moiety of NAD to yield NADP. The protein is NAD kinase of Teredinibacter turnerae (strain ATCC 39867 / T7901).